Consider the following 576-residue polypeptide: (+)-alpha-terpineol synthase (576 aa).

5 residues coordinate (2E)-geranyl diphosphate: Arg-286, Asp-323, Asp-327, Arg-466, and Asn-469. Residues Asp-323 and Asp-327 each coordinate Mg(2+). Residues 323–327 (DDVYD) carry the DDXXD motif motif. The Mg(2+) site is built by Asn-469, Thr-473, and Glu-477.

The protein belongs to the terpene synthase family. Tpsb subfamily. The cofactor is Mg(2+). Mn(2+) serves as cofactor.

The catalysed reaction is (2E,6E)-farnesyl diphosphate = beta-bisabolene + diphosphate. The enzyme catalyses (2E)-geranyl diphosphate + H2O = (R)-alpha-terpineol + diphosphate. It catalyses the reaction (2E)-geranyl diphosphate = (4S)-limonene + diphosphate. It participates in secondary metabolite biosynthesis; terpenoid biosynthesis. Monoterpene synthase which catalyzes the conversion of (2E)-geranyl diphosphate (GPP) to (R)-alpha-terpineol and (4S)-limonene, as well as small quantities of linalool, myrcene, (-)-alpha-pinene, (+)-sabinene and geraniol. To a lower extent, catalyzes the conversion of (2E,6E)-farnesyl diphosphate (FPP) to beta-bisabolene. This chain is (+)-alpha-terpineol synthase, found in Santalum album (White sandalwood).